We begin with the raw amino-acid sequence, 343 residues long: Tribbles homolog 2 (343 aa).

The segment at 25–50 is disordered; that stretch reads EELSSIRSAEPSQSFSPNLGSPSPPE. The span at 29–45 shows a compositional bias: polar residues; sequence SIRSAEPSQSFSPNLGS. In terms of domain architecture, Protein kinase spans 61 to 308; sequence IGKYLLLEPL…SQEILDHPWF (248 aa).

This sequence belongs to the protein kinase superfamily. CAMK Ser/Thr protein kinase family. Tribbles subfamily.

The protein resides in the cytoplasm. Its subcellular location is the cytoskeleton. In terms of biological role, interacts with MAPK kinases and regulates activation of MAP kinases. Does not display kinase activity. This is Tribbles homolog 2 from Mus musculus (Mouse).